A 406-amino-acid polypeptide reads, in one-letter code: LIM/homeobox protein Lhx1 (406 aa).

LIM zinc-binding domains lie at 4–54 (CAGC…CKND) and 63–117 (CAGC…CKED). Polar residues predominate over residues 125–136 (AKENSLHSATTG). 2 disordered regions span residues 125–187 (AKEN…RTTI) and 296–372 (FPQG…SAEV). Residues 137–148 (SDPSLSPDSQDP) are compositionally biased toward low complexity. Residues 151–167 (DDAKDSESANVSDKETG) are compositionally biased toward basic and acidic residues. The segment at residues 180–239 (RRGPRTTIKAKQLETLKAAFAATPKPTRHIREQLAQETGLNMRVIQVWFQNRRSKERRMK) is a DNA-binding region (homeobox).

It localises to the nucleus. In terms of biological role, transcriptional factor that defines subclasses of motoneurons that segregate into columns in the spinal cord and select distinct axon pathways. Acts in conjunction with ISL-2. The protein is LIM/homeobox protein Lhx1 (LHX1) of Gallus gallus (Chicken).